A 72-amino-acid chain; its full sequence is Small proline-rich protein 2B (72 aa).

A compositionally biased stretch (low complexity) spans 1–11 (MSYQQQQCKQP). Positions 1-20 (MSYQQQQCKQPCQPPPVCPT) are disordered. Repeat copies occupy residues 21–29 (PKCPEPCPP), 30–38 (PKCPEPCPP), and 39–47 (PKCPQPCPP). Positions 21–47 (PKCPEPCPPPKCPEPCPPPKCPQPCPP) are 3 X 9 AA tandem repeats of P-K-C-P-[EQ]-P-C-P-P. The segment at 42–72 (PQPCPPQQCQQKYPPVTPSPPCQPKYPPKSK) is disordered. The segment covering 56–72 (PVTPSPPCQPKYPPKSK) has biased composition (pro residues).

Belongs to the cornifin (SPRR) family. In terms of tissue distribution, suprabasal layers of squamous-differentiated tissues such as epidermis, esophagus, tongue and trachea.

The protein localises to the cytoplasm. In terms of biological role, cross-linked envelope protein of keratinocytes. It is a keratinocyte protein that first appears in the cell cytosol, but ultimately becomes cross-linked to membrane proteins by transglutaminase. All that results in the formation of an insoluble envelope beneath the plasma membrane. This is Small proline-rich protein 2B (SPRR2B) from Homo sapiens (Human).